A 315-amino-acid chain; its full sequence is Olfactory receptor 2V1 (315 aa).

7 consecutive transmembrane segments (helical) span residues 31-51 (TVML…LLIY), 59-79 (PMYF…CNIV), 100-120 (IQIG…GLMA), 145-165 (IAGS…VAAM), 196-216 (FDTL…SIIV), 239-259 (LATC…AMFI), and 273-293 (KVVS…IYSL). Cysteines 98 and 180 form a disulfide.

The protein belongs to the G-protein coupled receptor 1 family.

It is found in the cell membrane. Odorant receptor. Activated by (+) and (-)-limonene. The chain is Olfactory receptor 2V1 from Mus musculus (Mouse).